The primary structure comprises 403 residues: Metacaspase-1A (403 aa).

Residues 1-93 form a disordered region; that stretch reads MQHHHHSSYG…PPTDPVAFGH (93 aa). Low complexity predominate over residues 18 to 31; it reads GQAYRQQQPYYGQP. The span at 32–55 shows a compositional bias: pro residues; it reads SPQPYAQPPPPNYQRPSGYGPPPS. Residues His-194 and Cys-250 contribute to the active site.

It belongs to the peptidase C14B family.

In terms of biological role, involved in cell death (apoptosis). The sequence is that of Metacaspase-1A (casA) from Aspergillus terreus (strain NIH 2624 / FGSC A1156).